The chain runs to 179 residues: Large ribosomal subunit protein bL17 (179 aa).

The interval 123–179 is disordered; sequence RTRGTDTLPDTVTDTGPDSAPDPVPGSEPGSAAGDLPDADTAPADPGESSSNQRVIR. Residues 154-168 are compositionally biased toward low complexity; it reads AAGDLPDADTAPADP. A compositionally biased stretch (polar residues) spans 170–179; sequence ESSSNQRVIR.

Belongs to the bacterial ribosomal protein bL17 family. Part of the 50S ribosomal subunit. Contacts protein L32.

This Tropheryma whipplei (strain Twist) (Whipple's bacillus) protein is Large ribosomal subunit protein bL17.